Consider the following 622-residue polypeptide: MFDFEQQLKILPDKPGVYLMKNSLGEVIYVGKAKILKNRVRQYFQKSKNHSEKVRTMVKHISEFEYIVTDSEMEALVLECNLIKKYRPRYNILLKDDKIYPLIKITLNEDFPRIICARNKIKDGAKYFGPYISTGAVYETMEVIKKIFPIRDCKLNIKKGNVKVRPCLNYHIGLCKAPCTGHISKEEYGKIISGVMDFLSGKNKDIIRKLKEDMDTLSENMEFEKAAELRDKIFALEKIIEKQKITTGGFEDEDFINIHSDEKDSCIQVFFSRTGKIIGREHFIIEDTQDLPKGEIVANFIKEFYGGTAYIAKTIYVPEIYDVQLLEDWLSIKKDSKVYIKIPQKGDKKAILNLVEKNARTTLQNFKLKFIQDKKMYETSLEELMEILNLDDIPHRIEAYDVSNIQGVDSVGTMVVFENGRPKHNDYRRFKINEVKGANDYESMKEILRRRFQNGMEEIKRIKERKLEFSAGKFSFFPDLILMDGGKIQVSAALEVLKEFNIDITVCGMVKDDKHRTRGLIYRNEEMPLNRNSNIIKLITRIQDEVHRFAVTYHRSLRSKRVLHSVLEDIPNVGVKRRKELLKRFLSVENIKKASMEELISTPSIDMRTAESIISYFRGYKS.

In terms of domain architecture, GIY-YIG spans 13 to 92 (DKPGVYLMKN…IKKYRPRYNI (80 aa)). The 36-residue stretch at 204 to 239 (KDIIRKLKEDMDTLSENMEFEKAAELRDKIFALEKI) folds into the UVR domain.

Belongs to the UvrC family. As to quaternary structure, interacts with UvrB in an incision complex.

Its subcellular location is the cytoplasm. Functionally, the UvrABC repair system catalyzes the recognition and processing of DNA lesions. UvrC both incises the 5' and 3' sides of the lesion. The N-terminal half is responsible for the 3' incision and the C-terminal half is responsible for the 5' incision. The polypeptide is UvrABC system protein C (Clostridium kluyveri (strain ATCC 8527 / DSM 555 / NBRC 12016 / NCIMB 10680 / K1)).